Consider the following 109-residue polypeptide: MRLSILSVFSLVGAGMVSALPQESNLSMKRSDTSECVGPLLCCGTLTTPLDPVVDPLLLALGIDAANIVGSIGLLCHGYEESSCPTKPQCCTEANLLGGTLALGCADLK.

Residues 1-19 form the signal peptide; the sequence is MRLSILSVFSLVGAGMVSA. Intrachain disulfides connect cysteine 36-cysteine 90, cysteine 42-cysteine 84, cysteine 43-cysteine 76, and cysteine 91-cysteine 105.

Belongs to the fungal hydrophobin family.

The protein localises to the secreted. It localises to the cell wall. Aerial growth, conidiation, and dispersal of filamentous fungi in the environment rely upon a capability of their secreting small amphipathic proteins called hydrophobins (HPBs) with low sequence identity. Class I can self-assemble into an outermost layer of rodlet bundles on aerial cell surfaces, conferring cellular hydrophobicity that supports fungal growth, development and dispersal; whereas Class II form highly ordered films at water-air interfaces through intermolecular interactions but contribute nothing to the rodlet structure. In P.expansum, hydrophobins contribute to germination, tolerance to cold stress and mycotoxins patulin and citrinin production. The chain is Class I hydrophobin G from Penicillium expansum (Blue mold rot fungus).